A 906-amino-acid polypeptide reads, in one-letter code: Rho GTPase-activating protein gacJ (906 aa).

Residues 53 to 117 are disordered; it reads LEGHLNPSSH…RDNSRSDNIR (65 aa). The segment covering 69–79 has biased composition (low complexity); the sequence is NNNNNNNNNNN. Positions 92-117 are enriched in basic and acidic residues; the sequence is SRSDSKHHNRENSKSDRDNSRSDNIR. Residues 161–348 form the Rho-GAP domain; the sequence is EELQSLYPDQ…YMLEYFNDIF (188 aa). Disordered stretches follow at residues 368–415, 452–864, and 877–906; these read DTTS…SRSK, EIIP…SVLT, and ANQA…NINK. Over residues 381–404 the composition is skewed to polar residues; sequence NGGSPRTSNTPYQQQHQLSSQSMA. Residues 461–487 are compositionally biased toward low complexity; it reads TTTTTTTTTNTTTTTTTTNTTPNNTTT. 2 stretches are compositionally biased toward pro residues: residues 494-510 and 547-560; these read PVPP…PPNP and QPPP…PSPP. Positions 565-574 are enriched in polar residues; the sequence is KPTSKSDFIP. Low complexity-rich tracts occupy residues 575–597 and 613–629; these read STNN…SIPK and IEEP…TTTT. The span at 637 to 649 shows a compositional bias: polar residues; the sequence is FKNNGTISSGSKS. 2 stretches are compositionally biased toward low complexity: residues 650-663 and 683-694; these read NPNL…NQPL and SKPITTTPTIKK. Residues 708–721 show a composition bias toward pro residues; it reads PPSPSSSSPSPPHN. Composition is skewed to low complexity over residues 754 to 772, 785 to 816, and 844 to 861; these read PTIP…PTTP, PPIN…STPK, and SSPT…SSPS. Residues 880–890 show a composition bias toward polar residues; it reads AKKNPLSNSGG.

The protein resides in the cytoplasm. Functionally, rho GTPase-activating protein involved in the signal transduction pathway. The polypeptide is Rho GTPase-activating protein gacJ (gacJ) (Dictyostelium discoideum (Social amoeba)).